The chain runs to 176 residues: Protein MAL2 (176 aa).

The Cytoplasmic segment spans residues 1–34 (MSAGGASVPPPPNPAVSFPVPRVTLPAGPDILRT). One can recognise an MARVEL domain in the interval 31-175 (ILRTYSGAFV…SLGLALRRWR (145 aa)). Residues 35 to 55 (YSGAFVCLEILFGGLVWILVA) traverse the membrane as a helical segment. The Lumenal portion of the chain corresponds to 56–66 (SSNVPLPLLQG). The helical transmembrane segment at 67 to 87 (WVMFVSVTAFFFSLLFLGLFL) threads the bilayer. Topologically, residues 88-102 (SGMVTQIDANWNFLD) are cytoplasmic. Residues 103 to 123 (FAYHFTVFVFYFGAFLLEAAA) form a helical membrane-spanning segment. Over 124–149 (TSLHDLHYNITMTGQPLLNDNQYNIN) the chain is Lumenal. N-linked (GlcNAc...) asparagine glycosylation occurs at N132. A helical membrane pass occupies residues 150 to 170 (VAASIFAFMTTACYGCSLGLA). Topologically, residues 171–176 (LRRWRP) are cytoplasmic.

Belongs to the MAL family. In terms of assembly, interacts with TPD52L2.

It localises to the cell membrane. The protein resides in the apical cell membrane. Member of the machinery of polarized transport. Required for the indirect transcytotic route at the step of the egress of the transcytosing cargo from perinuclear endosomes in order for it to travel to the apical surface via a raft-dependent pathway. This chain is Protein MAL2 (MAL2), found in Pongo abelii (Sumatran orangutan).